Here is a 57-residue protein sequence, read N- to C-terminus: Small ribosomal subunit protein bS21 (57 aa).

The interval 24-57 is disordered; the sequence is SKSGTLQESRKREFYEKPSVKRKKKSEAARKRKF. Residues 31–42 are compositionally biased toward basic and acidic residues; it reads ESRKREFYEKPS. The span at 43-57 shows a compositional bias: basic residues; it reads VKRKKKSEAARKRKF.

It belongs to the bacterial ribosomal protein bS21 family.

This is Small ribosomal subunit protein bS21 (rpsU) from Listeria innocua serovar 6a (strain ATCC BAA-680 / CLIP 11262).